The following is a 101-amino-acid chain: uncharacterized protein (101 aa).

Residues 1–23 (MERRTGVVLIIFVTFCEAMMARA) form the signal peptide. The helical transmembrane segment at 38–58 (FLLFIIHTSCTMVAFIIGNLA) threads the bilayer.

The protein resides in the host membrane. This is an uncharacterized protein from Cryphonectria parasitica (Chestnut blight fungus).